A 524-amino-acid polypeptide reads, in one-letter code: Glutamyl-tRNA(Gln) amidotransferase subunit A, mitochondrial (524 aa).

Active-site charge relay system residues include Lys76 and Ser171. The active-site Acyl-ester intermediate is the Ser195.

The protein belongs to the amidase family. GatA subfamily. In terms of assembly, subunit of the heterotrimeric GatCAB amidotransferase (AdT) complex, composed of A (qrsl1), B (gatb) and C (gatc) subunits.

The protein localises to the mitochondrion. It carries out the reaction L-glutamyl-tRNA(Gln) + L-glutamine + ATP + H2O = L-glutaminyl-tRNA(Gln) + L-glutamate + ADP + phosphate + H(+). Its function is as follows. Allows the formation of correctly charged Gln-tRNA(Gln) through the transamidation of misacylated Glu-tRNA(Gln) in the mitochondria. The reaction takes place in the presence of glutamine and ATP through an activated gamma-phospho-Glu-tRNA(Gln). In Xenopus laevis (African clawed frog), this protein is Glutamyl-tRNA(Gln) amidotransferase subunit A, mitochondrial (qrsl1).